The sequence spans 455 residues: Keratin, type I cuticular Ha5 (455 aa).

Residues 1–97 (MASKCLKASF…FGEGILTGNE (97 aa)) are head. In terms of domain architecture, IF rod spans 97-408 (EKETMQSLND…GLLESEDSKL (312 aa)). The tract at residues 98–132 (KETMQSLNDRLASYLEKVRQLEQENASLESRIREW) is coil 1A. Residues 133-143 (CEQQVPYMCPD) are linker 1. Residues 144-244 (YQSYFRTMEE…HEEEVNSLRC (101 aa)) are coil 1B. A linker 12 region spans residues 245-260 (QLGDRLNVEVDAAPPV). A coil 2 region spans residues 261 to 404 (DLNRVLDEMR…NTYRGLLESE (144 aa)). The tail stretch occupies residues 405–455 (DSKLPCNPCAPDYSSSKSCLPCLPAVSCSTGAARTTCSPRPVCVPCPGGRF).

It belongs to the intermediate filament family.

This Mus musculus (Mouse) protein is Keratin, type I cuticular Ha5.